The chain runs to 551 residues: Rhodopsin kinase grk7-a (551 aa).

The residue at position 36 (Ser-36) is a Phosphoserine. Residues 57–174 (YQSICVEQPI…QNSPFYDRFL (118 aa)) form the RGS domain. In terms of domain architecture, Protein kinase spans 189–451 (FYEFRILGKG…DDDPRKHAFF (263 aa)). ATP is bound by residues 195 to 203 (LGKGGFGEV) and Lys-218. The Proton acceptor role is filled by Asp-314. The AGC-kinase C-terminal domain maps to 452-517 (KSINFQRLEA…GAIPISWQKE (66 aa)). Position 487 is a phosphoserine (Ser-487). A disordered region spans residues 529–551 (DPSREATGGGGNSGEKSGVCSIL). A compositionally biased stretch (low complexity) spans 542-551 (GEKSGVCSIL). A Cysteine methyl ester modification is found at Cys-548. Cys-548 carries S-geranylgeranyl cysteine lipidation. Positions 549 to 551 (SIL) are cleaved as a propeptide — removed in mature form.

Belongs to the protein kinase superfamily. AGC Ser/Thr protein kinase family. GPRK subfamily. Autophosphorylated in vitro at Ser-487. Phosphorylation at Ser-36 is regulated by light and activated by cAMP.

The protein resides in the membrane. It carries out the reaction L-threonyl-[rhodopsin] + ATP = O-phospho-L-threonyl-[rhodopsin] + ADP + H(+). It catalyses the reaction L-seryl-[rhodopsin] + ATP = O-phospho-L-seryl-[rhodopsin] + ADP + H(+). In terms of biological role, retina-specific kinase involved in the shutoff of the photoresponse and adaptation to changing light conditions via cone opsin phosphorylation, including rhodopsin (RHO). The chain is Rhodopsin kinase grk7-a (grk7-a) from Xenopus laevis (African clawed frog).